A 169-amino-acid polypeptide reads, in one-letter code: Lipoprotein signal peptidase (169 aa).

2 consecutive transmembrane segments (helical) span residues Pro59–Trp79 and Thr84–Asp104. Catalysis depends on residues Asp113 and Asp139. Residues Trp132 to Phe152 traverse the membrane as a helical segment.

The protein belongs to the peptidase A8 family.

Its subcellular location is the cell inner membrane. The enzyme catalyses Release of signal peptides from bacterial membrane prolipoproteins. Hydrolyzes -Xaa-Yaa-Zaa-|-(S,diacylglyceryl)Cys-, in which Xaa is hydrophobic (preferably Leu), and Yaa (Ala or Ser) and Zaa (Gly or Ala) have small, neutral side chains.. The protein operates within protein modification; lipoprotein biosynthesis (signal peptide cleavage). In terms of biological role, this protein specifically catalyzes the removal of signal peptides from prolipoproteins. This chain is Lipoprotein signal peptidase, found in Pelodictyon phaeoclathratiforme (strain DSM 5477 / BU-1).